The following is a 381-amino-acid chain: Probable G-protein coupled receptor 34 (381 aa).

At M1–Y61 the chain is on the extracellular side. N28, N36, and N42 each carry an N-linked (GlcNAc...) asparagine glycan. A helical transmembrane segment spans residues S62–I82. Residues H83–S88 are Cytoplasmic-facing. Residues I89–F109 form a helical membrane-spanning segment. At R110 to K128 the chain is on the extracellular side. C127 and C204 are oxidised to a cystine. A helical membrane pass occupies residues V129–S149. Residues L150–S171 are Cytoplasmic-facing. The chain crosses the membrane as a helical span at residues I172–L192. Topologically, residues T193–E216 are extracellular. The N-linked (GlcNAc...) asparagine glycan is linked to N200. A helical transmembrane segment spans residues A217–S237. The Cytoplasmic portion of the chain corresponds to Y238–F269. Residues I270–I290 form a helical membrane-spanning segment. Residues S291–E310 are Extracellular-facing. N295 carries an N-linked (GlcNAc...) asparagine glycan. A helical membrane pass occupies residues I311 to S331. The Cytoplasmic portion of the chain corresponds to S332–T381.

It belongs to the G-protein coupled receptor 1 family.

Its subcellular location is the cell membrane. In terms of biological role, G-protein-coupled receptor of lysophosphatidylserine (LysoPS) that plays different roles in immune response. Acts a damage-sensing receptor that triggers tissue repair upon recognition of dying neutrophils. Mechanistically, apoptotic neutrophils release lysophosphatydilserine that are recognized by type 3 innate lymphoid cells (ILC3s) via GPR34, which activates downstream PI3K-AKT and RAS-ERK signaling pathways leading to STAT3 activation and IL-22 production. Plays an important role in microglial function, controlling morphology and phagocytosis. This Gorilla gorilla gorilla (Western lowland gorilla) protein is Probable G-protein coupled receptor 34 (GPR34).